The primary structure comprises 309 residues: Homoserine kinase (309 aa).

Residue 91 to 101 participates in ATP binding; that stretch reads PIGSGLGSSAC.

This sequence belongs to the GHMP kinase family. Homoserine kinase subfamily.

It localises to the cytoplasm. The catalysed reaction is L-homoserine + ATP = O-phospho-L-homoserine + ADP + H(+). The protein operates within amino-acid biosynthesis; L-threonine biosynthesis; L-threonine from L-aspartate: step 4/5. In terms of biological role, catalyzes the ATP-dependent phosphorylation of L-homoserine to L-homoserine phosphate. This chain is Homoserine kinase, found in Klebsiella pneumoniae (strain 342).